We begin with the raw amino-acid sequence, 432 residues long: Adenylosuccinate synthetase (432 aa).

GTP is bound by residues 13–19 and 41–43; these read GDEGKGK and GHT. Residue D14 is the Proton acceptor of the active site. Residues D14 and G41 each contribute to the Mg(2+) site. Residues 14-17, 39-42, T130, R144, Q225, T240, and R304 each bind IMP; these read DEGK and NAGH. The Proton donor role is filled by H42. Residue 300–306 coordinates substrate; the sequence is ATTGRSR. GTP-binding positions include R306, 332–334, and 415–417; these read KLD and STG.

Belongs to the adenylosuccinate synthetase family. As to quaternary structure, homodimer. The cofactor is Mg(2+).

It is found in the cytoplasm. The enzyme catalyses IMP + L-aspartate + GTP = N(6)-(1,2-dicarboxyethyl)-AMP + GDP + phosphate + 2 H(+). It participates in purine metabolism; AMP biosynthesis via de novo pathway; AMP from IMP: step 1/2. In terms of biological role, plays an important role in the de novo pathway of purine nucleotide biosynthesis. Catalyzes the first committed step in the biosynthesis of AMP from IMP. In Yersinia pestis bv. Antiqua (strain Antiqua), this protein is Adenylosuccinate synthetase.